Reading from the N-terminus, the 471-residue chain is UDP-N-acetylmuramoylalanine--D-glutamate ligase (471 aa).

127-133 (GSNGKST) is a binding site for ATP.

The protein belongs to the MurCDEF family.

The protein resides in the cytoplasm. The enzyme catalyses UDP-N-acetyl-alpha-D-muramoyl-L-alanine + D-glutamate + ATP = UDP-N-acetyl-alpha-D-muramoyl-L-alanyl-D-glutamate + ADP + phosphate + H(+). It participates in cell wall biogenesis; peptidoglycan biosynthesis. Cell wall formation. Catalyzes the addition of glutamate to the nucleotide precursor UDP-N-acetylmuramoyl-L-alanine (UMA). This Colwellia psychrerythraea (strain 34H / ATCC BAA-681) (Vibrio psychroerythus) protein is UDP-N-acetylmuramoylalanine--D-glutamate ligase.